A 158-amino-acid polypeptide reads, in one-letter code: 6,7-dimethyl-8-ribityllumazine synthase (158 aa).

5-amino-6-(D-ribitylamino)uracil contacts are provided by residues Phe-23, 61-63 (SFE), and 85-87 (AVI). 90–91 (ET) is a binding site for (2S)-2-hydroxy-3-oxobutyl phosphate. The Proton donor role is filled by His-93. Phe-118 contacts 5-amino-6-(D-ribitylamino)uracil. Arg-132 is a (2S)-2-hydroxy-3-oxobutyl phosphate binding site.

Belongs to the DMRL synthase family.

It catalyses the reaction (2S)-2-hydroxy-3-oxobutyl phosphate + 5-amino-6-(D-ribitylamino)uracil = 6,7-dimethyl-8-(1-D-ribityl)lumazine + phosphate + 2 H2O + H(+). It participates in cofactor biosynthesis; riboflavin biosynthesis; riboflavin from 2-hydroxy-3-oxobutyl phosphate and 5-amino-6-(D-ribitylamino)uracil: step 1/2. Functionally, catalyzes the formation of 6,7-dimethyl-8-ribityllumazine by condensation of 5-amino-6-(D-ribitylamino)uracil with 3,4-dihydroxy-2-butanone 4-phosphate. This is the penultimate step in the biosynthesis of riboflavin. This Prochlorococcus marinus (strain MIT 9312) protein is 6,7-dimethyl-8-ribityllumazine synthase.